The sequence spans 126 residues: FCS-Like Zinc finger 17 (126 aa).

The FLZ-type zinc finger occupies 41–85 (CFLKTCHLCNKQLHQDKDVYMYRGDLGFCSRECRESQMLIDDRKE).

It belongs to the FLZ family. In terms of assembly, interacts with KIN10 and KIN11 via its FLZ-type zinc finger domain. Forms heterodimer with FLZ2 in vitro.

The protein resides in the nucleus. It localises to the cytoplasm. Functionally, may act as an adapter to facilitate the interaction of SnRK1 complex with effector proteins, conferring tissue- and stimulus-type specific differences in the SnRK1 regulation pathway. This chain is FCS-Like Zinc finger 17, found in Arabidopsis thaliana (Mouse-ear cress).